A 338-amino-acid chain; its full sequence is tRNA N6-adenosine threonylcarbamoyltransferase (338 aa).

Fe cation-binding residues include His-111 and His-115. Residues 133–137 (LVSGG), Asp-166, Gly-179, Asp-183, and Asn-275 each bind substrate. Asp-300 provides a ligand contact to Fe cation.

It belongs to the KAE1 / TsaD family. Fe(2+) serves as cofactor.

It localises to the cytoplasm. It catalyses the reaction L-threonylcarbamoyladenylate + adenosine(37) in tRNA = N(6)-L-threonylcarbamoyladenosine(37) in tRNA + AMP + H(+). Its function is as follows. Required for the formation of a threonylcarbamoyl group on adenosine at position 37 (t(6)A37) in tRNAs that read codons beginning with adenine. Is involved in the transfer of the threonylcarbamoyl moiety of threonylcarbamoyl-AMP (TC-AMP) to the N6 group of A37, together with TsaE and TsaB. TsaD likely plays a direct catalytic role in this reaction. The protein is tRNA N6-adenosine threonylcarbamoyltransferase of Treponema denticola (strain ATCC 35405 / DSM 14222 / CIP 103919 / JCM 8153 / KCTC 15104).